Consider the following 691-residue polypeptide: DNA ligase (691 aa).

NAD(+) contacts are provided by residues Asp-41–Asp-45, Ser-90–Leu-91, and Glu-130. Catalysis depends on Lys-132, which acts as the N6-AMP-lysine intermediate. NAD(+) is bound by residues Arg-153, Glu-190, Lys-307, and Lys-331. Residues Cys-425, Cys-428, Cys-443, and Cys-449 each contribute to the Zn(2+) site. The BRCT domain occupies Ala-610–Arg-691.

Belongs to the NAD-dependent DNA ligase family. LigA subfamily. Mg(2+) serves as cofactor. Mn(2+) is required as a cofactor.

It catalyses the reaction NAD(+) + (deoxyribonucleotide)n-3'-hydroxyl + 5'-phospho-(deoxyribonucleotide)m = (deoxyribonucleotide)n+m + AMP + beta-nicotinamide D-nucleotide.. In terms of biological role, DNA ligase that catalyzes the formation of phosphodiester linkages between 5'-phosphoryl and 3'-hydroxyl groups in double-stranded DNA using NAD as a coenzyme and as the energy source for the reaction. It is essential for DNA replication and repair of damaged DNA. This chain is DNA ligase, found in Burkholderia pseudomallei (strain 1106a).